The primary structure comprises 336 residues: HTH-type transcriptional repressor PurR (336 aa).

One can recognise an HTH lacI-type domain in the interval 2–56; it reads ATIKDVAKMAGVSTTTVSHVINKTRFVAKDTEEAVLSAIKQLNYSPSAVARSLKV. The segment at residues 4–23 is a DNA-binding region (H-T-H motif); the sequence is IKDVAKMAGVSTTTVSHVIN. Residues 48 to 56 mediate DNA binding; that stretch reads SAVARSLKV. The hypoxanthine site is built by tyrosine 73, lysine 188, threonine 190, phenylalanine 219, and aspartate 273.

Homodimer.

It functions in the pathway purine metabolism; purine nucleotide biosynthesis [regulation]. Functionally, is the main repressor of the genes involved in the de novo synthesis of purine nucleotides, regulating purB, purC, purEK, purF, purHD, purL, purMN and guaBA expression. PurR is allosterically activated to bind its cognate DNA by binding the purine corepressors, hypoxanthine or guanine, thereby effecting transcription repression. This Haemophilus influenzae (strain PittGG) protein is HTH-type transcriptional repressor PurR.